A 32-amino-acid chain; its full sequence is Cytochrome b6-f complex subunit 7 (32 aa).

The chain crosses the membrane as a helical span at residues 9–27 (AAVFWVLIPVGLLGGVLLL).

Belongs to the PetM family. In terms of assembly, the 4 large subunits of the cytochrome b6-f complex are cytochrome b6, subunit IV (17 kDa polypeptide, PetD), cytochrome f and the Rieske protein, while the 4 small subunits are PetG, PetL, PetM and PetN. The complex functions as a dimer.

It is found in the cellular thylakoid membrane. In terms of biological role, component of the cytochrome b6-f complex, which mediates electron transfer between photosystem II (PSII) and photosystem I (PSI), cyclic electron flow around PSI, and state transitions. The sequence is that of Cytochrome b6-f complex subunit 7 from Prochlorococcus marinus (strain NATL1A).